Consider the following 335-residue polypeptide: Tetraacyldisaccharide 4'-kinase (335 aa).

Position 59–66 (59–66 (TAGGNGKT)) interacts with ATP.

The protein belongs to the LpxK family.

It carries out the reaction a lipid A disaccharide + ATP = a lipid IVA + ADP + H(+). It functions in the pathway glycolipid biosynthesis; lipid IV(A) biosynthesis; lipid IV(A) from (3R)-3-hydroxytetradecanoyl-[acyl-carrier-protein] and UDP-N-acetyl-alpha-D-glucosamine: step 6/6. In terms of biological role, transfers the gamma-phosphate of ATP to the 4'-position of a tetraacyldisaccharide 1-phosphate intermediate (termed DS-1-P) to form tetraacyldisaccharide 1,4'-bis-phosphate (lipid IVA). The sequence is that of Tetraacyldisaccharide 4'-kinase from Vibrio parahaemolyticus serotype O3:K6 (strain RIMD 2210633).